A 524-amino-acid chain; its full sequence is NAD(P)H-quinone oxidoreductase chain 4, chloroplastic (524 aa).

The next 14 helical transmembrane spans lie at 4–24 (YPWL…IPLI), 31–51 (LIRW…TYVF), 87–107 (IALV…AWPV), 113–133 (LFYF…LAQD), 134–154 (LLLF…LLSM), 167–187 (FILY…TISL), 211–231 (ILVY…FPFH), 242–262 (HYST…YGFI), 275–295 (IFAP…ALVS), 308–328 (SSVS…DLGL), 330–350 (GAIL…FLAG), 386–406 (LALP…GIVA), 417–437 (IITC…LSMV), and 465–485 (VFII…PDLT).

The protein belongs to the complex I subunit 4 family.

It is found in the plastid. The protein localises to the chloroplast thylakoid membrane. The catalysed reaction is a plastoquinone + NADH + (n+1) H(+)(in) = a plastoquinol + NAD(+) + n H(+)(out). It carries out the reaction a plastoquinone + NADPH + (n+1) H(+)(in) = a plastoquinol + NADP(+) + n H(+)(out). This is NAD(P)H-quinone oxidoreductase chain 4, chloroplastic from Staurastrum punctulatum (Green alga).